Reading from the N-terminus, the 123-residue chain is Small ribosomal subunit protein uS12 (123 aa).

Residue Asp89 is modified to 3-methylthioaspartic acid.

This sequence belongs to the universal ribosomal protein uS12 family. In terms of assembly, part of the 30S ribosomal subunit. Contacts proteins S8 and S17. May interact with IF1 in the 30S initiation complex.

Functionally, with S4 and S5 plays an important role in translational accuracy. Its function is as follows. Interacts with and stabilizes bases of the 16S rRNA that are involved in tRNA selection in the A site and with the mRNA backbone. Located at the interface of the 30S and 50S subunits, it traverses the body of the 30S subunit contacting proteins on the other side and probably holding the rRNA structure together. The combined cluster of proteins S8, S12 and S17 appears to hold together the shoulder and platform of the 30S subunit. The sequence is that of Small ribosomal subunit protein uS12 from Geobacter metallireducens (strain ATCC 53774 / DSM 7210 / GS-15).